We begin with the raw amino-acid sequence, 446 residues long: N-succinylarginine dihydrolase (446 aa).

Substrate is bound by residues 19-28, Asn110, and 137-138; these read AGLSFGNEAS and HR. Residue Glu174 is part of the active site. Arg213 contributes to the substrate binding site. His249 is a catalytic residue. Substrate-binding residues include Asp251 and Asn364. Cys370 (nucleophile) is an active-site residue.

Belongs to the succinylarginine dihydrolase family. Homodimer.

The enzyme catalyses N(2)-succinyl-L-arginine + 2 H2O + 2 H(+) = N(2)-succinyl-L-ornithine + 2 NH4(+) + CO2. It functions in the pathway amino-acid degradation; L-arginine degradation via AST pathway; L-glutamate and succinate from L-arginine: step 2/5. In terms of biological role, catalyzes the hydrolysis of N(2)-succinylarginine into N(2)-succinylornithine, ammonia and CO(2). The sequence is that of N-succinylarginine dihydrolase from Serratia proteamaculans (strain 568).